The sequence spans 258 residues: Snake venom serine protease 3 (258 aa).

A signal peptide spans 1-18 (MVLIRVLANLLILQLSYA). A propeptide spanning residues 19–24 (QKSSEL) is cleaved from the precursor. The Peptidase S1 domain occupies 25–249 (IIGGHPCNIN…YTDWIQSIIA (225 aa)). Intrachain disulfides connect Cys-31-Cys-163, Cys-50-Cys-66, Cys-98-Cys-256, Cys-142-Cys-210, Cys-174-Cys-189, and Cys-200-Cys-225. A glycan (N-linked (GlcNAc...) asparagine) is linked at Asn-44. Active-site charge relay system residues include His-65 and Asp-110. Catalysis depends on Ser-204, which acts as the Charge relay system. A glycan (N-linked (GlcNAc...) asparagine) is linked at Asn-239.

It belongs to the peptidase S1 family. Snake venom subfamily. In terms of assembly, monomer. Expressed by the venom gland.

Its subcellular location is the secreted. Its function is as follows. Snake venom serine protease that may act in the hemostasis system of the prey. The protein is Snake venom serine protease 3 of Protobothrops jerdonii (Jerdon's pitviper).